Here is a 1367-residue protein sequence, read N- to C-terminus: DNA polymerase III PolC-type (1367 aa).

In terms of domain architecture, Exonuclease spans 358 to 513 (FVVLDFETTG…DDARVTAQVF (156 aa)).

The protein belongs to the DNA polymerase type-C family. PolC subfamily.

The protein localises to the cytoplasm. It catalyses the reaction DNA(n) + a 2'-deoxyribonucleoside 5'-triphosphate = DNA(n+1) + diphosphate. Functionally, required for replicative DNA synthesis. This DNA polymerase also exhibits 3' to 5' exonuclease activity. The protein is DNA polymerase III PolC-type of Thermotoga petrophila (strain ATCC BAA-488 / DSM 13995 / JCM 10881 / RKU-1).